The sequence spans 667 residues: Leucine zipper putative tumor suppressor 2 (667 aa).

Low complexity predominate over residues 1–25; it reads MAIVQTLPVPLEPAPEAATAQQAPA. Disordered stretches follow at residues 1-132, 150-325, and 516-541; these read MAIV…PVSG, PVLP…DEAL, and QEAERLREKAGQLDSEAAGLREPPVP. The required for centrosomal localization stretch occupies residues 1-333; that stretch reads MAIVQTLPVP…ALLHCVLEGK (333 aa). Polar residues predominate over residues 172–181; that stretch reads PSGSQGSLTQ. A compositionally biased stretch (low complexity) spans 187 to 198; that stretch reads ASSSSSSSSSAA. A compositionally biased stretch (polar residues) spans 212–232; the sequence is PSGTLSDSGRNSLSSLPTYST. Over residues 241–282 the composition is skewed to low complexity; that stretch reads SPGGHLPSHGPGRGALPGPARGAPTGPSHSDSGRSSSSKSTG. S248 is modified (phosphoserine). Gly residues predominate over residues 283-294; that stretch reads SLGGRLAGGLLG. Residue S295 is modified to Phosphoserine. The segment covering 310 to 321 has biased composition (pro residues); that stretch reads SPPPPPPPPPPS. Residues 329-647 are a coiled coil; it reads VLEGKLRDRE…LELEARELAD (319 aa). The interval 445–667 is sufficient for interaction with CTNNB1; that stretch reads SGEISLLKQQ…CLEEITATEI (223 aa). Residues 448 to 667 form a sufficient for interaction with KATNB1 and for inhibition of katanin-mediated microtubule severing region; the sequence is ISLLKQQLKE…CLEEITATEI (220 aa). A compositionally biased stretch (basic and acidic residues) spans 516 to 526; sequence QEAERLREKAG. S568 is subject to Phosphoserine. Residues 629-638 carry the Nuclear export signal motif; it reads LEQELQQLSL.

This sequence belongs to the LZTS2 family. As to quaternary structure, interacts with KATNB1. Also interacts with CTNNB1, gamma-tubulin and KIF23.

Its subcellular location is the cytoplasm. It is found in the cytoskeleton. The protein resides in the microtubule organizing center. The protein localises to the centrosome. Functionally, negative regulator of katanin-mediated microtubule severing and release from the centrosome. Required for central spindle formation and the completion of cytokinesis. May negatively regulate axonal outgrowth by preventing the formation of microtubule bundles that are necessary for transport within the elongating axon. Negative regulator of the Wnt signaling pathway. Represses beta-catenin-mediated transcriptional activation by promoting the nuclear exclusion of beta-catenin. The polypeptide is Leucine zipper putative tumor suppressor 2 (Bos taurus (Bovine)).